The chain runs to 285 residues: Probable enoyl-CoA hydratase echA12 (285 aa).

The protein belongs to the enoyl-CoA hydratase/isomerase family.

The enzyme catalyses a (3S)-3-hydroxyacyl-CoA = a (2E)-enoyl-CoA + H2O. It carries out the reaction a 4-saturated-(3S)-3-hydroxyacyl-CoA = a (3E)-enoyl-CoA + H2O. Functionally, could possibly oxidize fatty acids using specific components. The polypeptide is Probable enoyl-CoA hydratase echA12 (echA12) (Mycobacterium tuberculosis (strain CDC 1551 / Oshkosh)).